The primary structure comprises 128 residues: Arginine decarboxylase proenzyme (128 aa).

Serine 76 (schiff-base intermediate with substrate; via pyruvic acid) is an active-site residue. At serine 76 the chain carries Pyruvic acid (Ser); by autocatalysis. The Proton acceptor; for processing activity role is filled by histidine 81. The active-site Proton donor; for catalytic activity is cysteine 96.

Belongs to the prokaryotic AdoMetDC family. Type 1 subfamily. As to quaternary structure, heterooctamer of four alpha and four beta chains arranged as a tetramer of alpha/beta heterodimers. Pyruvate is required as a cofactor. In terms of processing, is synthesized initially as an inactive proenzyme. Formation of the active enzyme involves a self-maturation process in which the active site pyruvoyl group is generated from an internal serine residue via an autocatalytic post-translational modification. Two non-identical subunits are generated from the proenzyme in this reaction, and the pyruvate is formed at the N-terminus of the alpha chain, which is derived from the carboxyl end of the proenzyme. The post-translation cleavage follows an unusual pathway, termed non-hydrolytic serinolysis, in which the side chain hydroxyl group of the serine supplies its oxygen atom to form the C-terminus of the beta chain, while the remainder of the serine residue undergoes an oxidative deamination to produce ammonia and the pyruvoyl group blocking the N-terminus of the alpha chain.

The catalysed reaction is L-arginine + H(+) = agmatine + CO2. Its pathway is amine and polyamine biosynthesis; agmatine biosynthesis; agmatine from L-arginine: step 1/1. Its function is as follows. Specifically catalyzes the decarboxylation of L-arginine to agmatine. Has no S-adenosylmethionine decarboxylase (AdoMetDC) activity. This chain is Arginine decarboxylase proenzyme, found in Metallosphaera sedula (strain ATCC 51363 / DSM 5348 / JCM 9185 / NBRC 15509 / TH2).